The primary structure comprises 300 residues: 4-hydroxy-tetrahydrodipicolinate synthase (300 aa).

A pyruvate-binding site is contributed by Thr45. Tyr140 functions as the Proton donor/acceptor in the catalytic mechanism. The active-site Schiff-base intermediate with substrate is the Lys169. Val210 contributes to the pyruvate binding site.

This sequence belongs to the DapA family. In terms of assembly, homotetramer; dimer of dimers.

The protein localises to the cytoplasm. It carries out the reaction L-aspartate 4-semialdehyde + pyruvate = (2S,4S)-4-hydroxy-2,3,4,5-tetrahydrodipicolinate + H2O + H(+). It functions in the pathway amino-acid biosynthesis; L-lysine biosynthesis via DAP pathway; (S)-tetrahydrodipicolinate from L-aspartate: step 3/4. Functionally, catalyzes the condensation of (S)-aspartate-beta-semialdehyde [(S)-ASA] and pyruvate to 4-hydroxy-tetrahydrodipicolinate (HTPA). This chain is 4-hydroxy-tetrahydrodipicolinate synthase, found in Helicobacter acinonychis (strain Sheeba).